We begin with the raw amino-acid sequence, 299 residues long: tRNA pseudouridine synthase B (299 aa).

D47 (nucleophile) is an active-site residue.

Belongs to the pseudouridine synthase TruB family. Type 1 subfamily.

The catalysed reaction is uridine(55) in tRNA = pseudouridine(55) in tRNA. Its function is as follows. Responsible for synthesis of pseudouridine from uracil-55 in the psi GC loop of transfer RNAs. This Dechloromonas aromatica (strain RCB) protein is tRNA pseudouridine synthase B.